The sequence spans 1110 residues: RNA2 polyprotein (1110 aa).

This sequence belongs to the nepoviruses RNA2 polyprotein family. Specific enzymatic cleavages in vivo by the P1 encoded 3C-like protease yield mature proteins.

The protein resides in the host cell junction. It is found in the host plasmodesma. Its subcellular location is the host cytoplasm. The protein localises to the host nucleus. It localises to the virion. Functionally, implicated in RNA2 replication. Could also be required for nematode transmission of the virus. Its function is as follows. Transports viral genome to neighboring plant cells directly through plasmosdesmata, without any budding. The movement protein allows efficient cell to cell propagation, by bypassing the host cell wall barrier. Acts by forming a tubular structure at the host plasmodesmata, enlarging it enough to allow free passage of virion capsids. This is RNA2 polyprotein from Vitis vinifera (Grape).